The primary structure comprises 54 residues: Ovomucoid (54 aa).

Residues 4–54 form the Kazal-like domain; the sequence is VDCSEYPKPVCSLEYMPLCGSDSQTYSNECNFCNAVVDSNGTLTLSHFGKC. 3 disulfides stabilise this stretch: cysteine 6/cysteine 36, cysteine 14/cysteine 33, and cysteine 22/cysteine 54. N-linked (GlcNAc...) asparagine glycosylation is present at asparagine 43.

It localises to the secreted. The sequence is that of Ovomucoid from Caracara plancus (Southern caracara).